A 955-amino-acid chain; its full sequence is Aminopeptidase A (955 aa).

Residues 1 to 17 (MDIEDKSSKMHCMKGKH) are Cytoplasmic-facing. Residues 18–38 (VAIICGVVIAVGLILGLGLGL) traverse the membrane as a helical; Signal-anchor for type II membrane protein segment. Topologically, residues 39–955 (GLKPEACNPP…LENSEQPNFV (917 aa)) are extracellular. A disordered region spans residues 49–69 (EDNGLLSTKPPTTSTPNVTNP). Low complexity predominate over residues 55-69 (STKPPTTSTPNVTNP). Residues N65, N118, and N192 are each glycosylated (N-linked (GlcNAc...) asparagine). E218 is a binding site for substrate. Residues N312, N319, and N335 are each glycosylated (N-linked (GlcNAc...) asparagine). Residue 352–356 (GAMEN) coordinates substrate. Residue H388 participates in Zn(2+) binding. The active-site Proton acceptor is the E389. 2 residues coordinate Zn(2+): H392 and E411. N-linked (GlcNAc...) asparagine glycans are attached at residues N458, N547, N584, N592, N647, N674, N681, N759, N766, N823, and N836. Substrate is bound at residue R882.

This sequence belongs to the peptidase M1 family. As to quaternary structure, homodimer; disulfide-linked. Zn(2+) is required as a cofactor.

It is found in the cell membrane. It carries out the reaction Release of N-terminal glutamate (and to a lesser extent aspartate) from a peptide.. The partially purified protein is inhibited by the aminopeptidase competitive inhibitors amastatin (Leu and acidic inhibitor), and bestatin (Leu inhibitor), by chelating agents EDTA, and 1,10-Phenanthroline, as well as by Zn(2+) ions. Substrate specificity is modulated by Ca(2+), Ba(2+), and Mn(2+) ions which enhances the enzymatic activity for cleavage of acidic residues. In terms of biological role, venom protein that cleaves N-terminal acidic residues from peptides with high potency in presence of calcium. It may have several roles in venom including alteration of blood pressure by cleaving circulating angiotensin-2, general degradation of host tissue, increase of permeability to other venom components, and/or processing of other toxins in the venom. This Gloydius brevicauda (Korean slamosa snake) protein is Aminopeptidase A.